The chain runs to 276 residues: MGLKRFKPVTPGRRFMVISDFSDITKTEPEKSLLAPLKKTGGRNHHGRITVRHRGGGHKRRYRIIDFKRYDKAGIPAKVLAIEYDPNRSARIALLLYADGEKRYILAPKGIKVGDTLMSGSDAEIKPGNALPLEKIPVGTLVHNVEFTPGKGGQIARAAGTYCQIMAKEGDYALLRMPSGELRKVHIKCYATVGVVGNEDHKNEVHGKAGRVRWLGRRPHVRGVAMNPVDHPHGGGEGRGKGHHPTSPWGLPTKGYKTRRGKRPSDKFIVRRRNEV.

The tract at residues 223 to 276 (GVAMNPVDHPHGGGEGRGKGHHPTSPWGLPTKGYKTRRGKRPSDKFIVRRRNEV) is disordered. 2 stretches are compositionally biased toward basic and acidic residues: residues 230–240 (DHPHGGGEGRG) and 263–276 (RPSDKFIVRRRNEV).

This sequence belongs to the universal ribosomal protein uL2 family. Part of the 50S ribosomal subunit. Forms a bridge to the 30S subunit in the 70S ribosome.

Its function is as follows. One of the primary rRNA binding proteins. Required for association of the 30S and 50S subunits to form the 70S ribosome, for tRNA binding and peptide bond formation. It has been suggested to have peptidyltransferase activity; this is somewhat controversial. Makes several contacts with the 16S rRNA in the 70S ribosome. The sequence is that of Large ribosomal subunit protein uL2 from Thermotoga neapolitana (strain ATCC 49049 / DSM 4359 / NBRC 107923 / NS-E).